We begin with the raw amino-acid sequence, 440 residues long: Damage-control phosphatase ARMT1 (440 aa).

The Mn(2+) site is built by Asp252 and Asn253. 252-253 (DN) lines the substrate pocket. 2 residues coordinate S-adenosyl-L-methionine: Glu257 and Asp290. A Mn(2+)-binding site is contributed by Asp290. Residues 366-370 (DLNYR) and Lys403 each bind substrate. The Subfamily III RTxK motif motif lies at 400–403 (RTLK).

The protein belongs to the damage-control phosphatase family. Sugar phosphate phosphatase III subfamily. It depends on Mn(2+) as a cofactor. Ni(2+) serves as cofactor. Post-translationally, automethylated.

It carries out the reaction beta-D-fructose 1-phosphate + H2O = D-fructose + phosphate. The catalysed reaction is beta-D-fructose 6-phosphate = dihydroxyacetone + D-glyceraldehyde 3-phosphate. The enzyme catalyses L-glutamyl-[protein] + S-adenosyl-L-methionine = [protein]-L-glutamate 5-O-methyl ester + S-adenosyl-L-homocysteine. In terms of biological role, metal-dependent phosphatase that shows phosphatase activity against several substrates, including fructose-1-phosphate and fructose-6-phosphate. Its preference for fructose-1-phosphate, a strong glycating agent that causes DNA damage rather than a canonical yeast metabolite, suggests a damage-control function in hexose phosphate metabolism. Has also been shown to have O-methyltransferase activity that methylates glutamate residues of target proteins to form gamma-glutamyl methyl ester residues. Possibly methylates PCNA, suggesting it is involved in the DNA damage response. The sequence is that of Damage-control phosphatase ARMT1 from Xenopus laevis (African clawed frog).